We begin with the raw amino-acid sequence, 400 residues long: Tyrosine--tRNA ligase (400 aa).

Residues P45–H54 carry the 'HIGH' region motif. A 'KMSKS' region motif is present at residues K230–S234. K233 serves as a coordination point for ATP. The S4 RNA-binding domain maps to E339–I399.

This sequence belongs to the class-I aminoacyl-tRNA synthetase family. TyrS type 2 subfamily. As to quaternary structure, homodimer.

It is found in the cytoplasm. The catalysed reaction is tRNA(Tyr) + L-tyrosine + ATP = L-tyrosyl-tRNA(Tyr) + AMP + diphosphate + H(+). Catalyzes the attachment of tyrosine to tRNA(Tyr) in a two-step reaction: tyrosine is first activated by ATP to form Tyr-AMP and then transferred to the acceptor end of tRNA(Tyr). The sequence is that of Tyrosine--tRNA ligase from Helicobacter hepaticus (strain ATCC 51449 / 3B1).